A 235-amino-acid polypeptide reads, in one-letter code: Probable queuosine precursor transporter (235 aa).

The next 6 membrane-spanning stretches (helical) occupy residues Ile17–Ile37, Phe56–Val76, Ile87–Ser107, Ile127–Asn147, Trp155–Phe175, and Phe201–Ile221.

Belongs to the vitamin uptake transporter (VUT/ECF) (TC 2.A.88) family. Q precursor transporter subfamily.

It is found in the cell inner membrane. In terms of biological role, involved in the import of queuosine (Q) precursors, required for Q precursor salvage. This is Probable queuosine precursor transporter from Haemophilus influenzae (strain ATCC 51907 / DSM 11121 / KW20 / Rd).